Here is a 425-residue protein sequence, read N- to C-terminus: Putative integrase/recombinase y4rF (425 aa).

In terms of domain architecture, Core-binding (CB) spans Asp123–Cys210. One can recognise a Tyr recombinase domain in the interval His233–Leu418. Catalysis depends on residues Arg273, Lys298, His370, Arg373, and His396. Tyr405 functions as the O-(3'-phospho-DNA)-tyrosine intermediate in the catalytic mechanism.

It belongs to the 'phage' integrase family.

This is Putative integrase/recombinase y4rF from Sinorhizobium fredii (strain NBRC 101917 / NGR234).